We begin with the raw amino-acid sequence, 372 residues long: DNA replication and repair protein RecF (372 aa).

An ATP-binding site is contributed by 30 to 37; that stretch reads GDNGQGKT.

The protein belongs to the RecF family.

Its subcellular location is the cytoplasm. Functionally, the RecF protein is involved in DNA metabolism; it is required for DNA replication and normal SOS inducibility. RecF binds preferentially to single-stranded, linear DNA. It also seems to bind ATP. The chain is DNA replication and repair protein RecF from Ruminiclostridium cellulolyticum (strain ATCC 35319 / DSM 5812 / JCM 6584 / H10) (Clostridium cellulolyticum).